A 105-amino-acid polypeptide reads, in one-letter code: Imizoquin biosynthesis cluster protein I (105 aa).

Residues 1–15 are compositionally biased toward polar residues; it reads MSSGEPTTMTPSPSE. Residues 1 to 43 are disordered; sequence MSSGEPTTMTPSPSERTPLLSNGSGGAADDGGTTVTISKPNDG.

The protein operates within secondary metabolite biosynthesis. Functionally, part of the gene cluster that mediates the biosynthesis of imizoquins A to D, tripeptide-derived alkaloids that serve a protective role against oxidative stress that are essential for normal germination. ImqB is a canonical three-module NRPS that assembles the tripeptide backbone of the imizoquins via condensation of Trp, Tyr, and Leu-derived precursors. N-methylation by imqF and phenol oxidation by imqC, followed by cyclization via the FAD-dependent oxidase imqH carry out the three-step transformation of L-tyrosine into tetrahydroisoquinoline. Importantly, this sequence requires the presence of a free amine in the tyrosine moiety, indicating that isoquinoline formation occurs prior to peptide bond formation. The imidazolidin-4-one ring of imizoquins could form following additional oxidation of the methyl-derived bridgehead carbon by imqH. Lastly, O-methylation by imqG and leucine hydroxylation by imqE complete biosynthesis of the imizoquins. This is Imizoquin biosynthesis cluster protein I from Aspergillus flavus (strain ATCC 200026 / FGSC A1120 / IAM 13836 / NRRL 3357 / JCM 12722 / SRRC 167).